Reading from the N-terminus, the 134-residue chain is ATP synthase epsilon chain, chloroplastic (134 aa).

The protein belongs to the ATPase epsilon chain family. F-type ATPases have 2 components, CF(1) - the catalytic core - and CF(0) - the membrane proton channel. CF(1) has five subunits: alpha(3), beta(3), gamma(1), delta(1), epsilon(1). CF(0) has three main subunits: a, b and c.

The protein localises to the plastid. It localises to the chloroplast thylakoid membrane. Functionally, produces ATP from ADP in the presence of a proton gradient across the membrane. In Spinacia oleracea (Spinach), this protein is ATP synthase epsilon chain, chloroplastic.